A 669-amino-acid chain; its full sequence is DNA ligase 2 (669 aa).

NAD(+)-binding positions include 35-39 (DKEYD) and 83-84 (SL). Lys125 acts as the N6-AMP-lysine intermediate in catalysis. Positions 147, 181, and 317 each coordinate NAD(+). The Zn(2+) site is built by Cys410, Cys413, Cys426, and Cys432. The 80-residue stretch at 590–669 (VVENAFTGKT…EEFEQLINNM (80 aa)) folds into the BRCT domain.

It belongs to the NAD-dependent DNA ligase family. LigA subfamily. It depends on Mg(2+) as a cofactor. Mn(2+) serves as cofactor.

It catalyses the reaction NAD(+) + (deoxyribonucleotide)n-3'-hydroxyl + 5'-phospho-(deoxyribonucleotide)m = (deoxyribonucleotide)n+m + AMP + beta-nicotinamide D-nucleotide.. In terms of biological role, DNA ligase that catalyzes the formation of phosphodiester linkages between 5'-phosphoryl and 3'-hydroxyl groups in double-stranded DNA using NAD as a coenzyme and as the energy source for the reaction. It is essential for DNA replication and repair of damaged DNA. This Clostridium acetobutylicum (strain ATCC 824 / DSM 792 / JCM 1419 / IAM 19013 / LMG 5710 / NBRC 13948 / NRRL B-527 / VKM B-1787 / 2291 / W) protein is DNA ligase 2.